A 188-amino-acid polypeptide reads, in one-letter code: Putative manganese efflux pump MntP (188 aa).

A run of 6 helical transmembrane segments spans residues 3–23 (LSATILLAFGMSMDAFAASIG), 41–61 (LIFGVIETLTPLVGWGLGMLA), 62–82 (SQFVLEWNHWIAFILLVFLGG), 107–129 (LLVTTAFATSLDAMAVGVGLAFL), 143–163 (ATFLMSTLGIMVGRFIGPLLG), and 168–188 (ILGGIVLIGIGSEILWSHFAG).

The protein belongs to the MntP (TC 9.B.29) family.

It is found in the cell inner membrane. In terms of biological role, probably functions as a manganese efflux pump. The sequence is that of Putative manganese efflux pump MntP from Klebsiella pneumoniae (strain 342).